Reading from the N-terminus, the 225-residue chain is ATP synthase subunit a (225 aa).

The next 5 membrane-spanning stretches (helical) occupy residues 16–36 (LFVYAFHFCLVAIIVVLVAKL), 79–99 (LVATIGFVVFFSNAIGIIPGF), 105–125 (SLNLTLTLALIVFFYYHFEGI), 176–196 (LFLLVMLTLAPWFAPLPAYAL), and 202–222 (VLQTFIFMMLTYVYLAGAVAI).

Belongs to the ATPase A chain family. In terms of assembly, F-type ATPases have 2 components, CF(1) - the catalytic core - and CF(0) - the membrane proton channel. CF(1) has five subunits: alpha(3), beta(3), gamma(1), delta(1), epsilon(1). CF(0) has three main subunits: a(1), b(2) and c(9-12). The alpha and beta chains form an alternating ring which encloses part of the gamma chain. CF(1) is attached to CF(0) by a central stalk formed by the gamma and epsilon chains, while a peripheral stalk is formed by the delta and b chains.

It localises to the cell inner membrane. In terms of biological role, key component of the proton channel; it plays a direct role in the translocation of protons across the membrane. This is ATP synthase subunit a from Campylobacter curvus (strain 525.92).